The sequence spans 419 residues: E3 ubiquitin-protein ligase RNFT1 (419 aa).

Residues 1-120 are disordered; the sequence is MKLRAQFDRG…SGESDLESGE (120 aa). 2 stretches are compositionally biased toward polar residues: residues 31-44 and 72-82; these read EPSS…SLTL and GSSSGSTNGRG. Residues 84 to 102 show a composition bias toward basic residues; that stretch reads TSRRMRTASHSHSHTHGHG. 6 helical membrane passes run 141 to 161, 187 to 207, 217 to 237, 240 to 260, 270 to 290, and 303 to 323; these read FIVI…AVAV, LHCA…FYTF, FFAN…SVGV, FILK…PCPL, YMLI…PLWF, and VGLT…LLAL. The tract at residues 352-403 is required for ubiquitin ligase activity and for protection against ER stress-induced cell death; sequence IREAGDICPICQADFKQPRVLVCQHIFCEECIAQWLNQERTCPLCRTVITDK. Residues 359-397 form an RING-type zinc finger; sequence CPICQADFKQPRVLVCQHIFCEECIAQWLNQERTCPLCR.

The protein localises to the endoplasmic reticulum membrane. The catalysed reaction is S-ubiquitinyl-[E2 ubiquitin-conjugating enzyme]-L-cysteine + [acceptor protein]-L-lysine = [E2 ubiquitin-conjugating enzyme]-L-cysteine + N(6)-ubiquitinyl-[acceptor protein]-L-lysine.. Its pathway is protein modification; protein ubiquitination. E3 ubiquitin-protein ligase that acts in the endoplasmic reticulum (ER)-associated degradation (ERAD) pathway, which targets misfolded proteins that accumulate in the endoplasmic reticulum (ER) for ubiquitination and subsequent proteasome-mediated degradation. Protects cells from ER stress-induced apoptosis. The polypeptide is E3 ubiquitin-protein ligase RNFT1 (rnft1) (Danio rerio (Zebrafish)).